The chain runs to 241 residues: Ribonuclease PH (241 aa).

Phosphate contacts are provided by residues arginine 87 and 125-127 (GTR).

Belongs to the RNase PH family. In terms of assembly, homohexameric ring arranged as a trimer of dimers.

It carries out the reaction tRNA(n+1) + phosphate = tRNA(n) + a ribonucleoside 5'-diphosphate. In terms of biological role, phosphorolytic 3'-5' exoribonuclease that plays an important role in tRNA 3'-end maturation. Removes nucleotide residues following the 3'-CCA terminus of tRNAs; can also add nucleotides to the ends of RNA molecules by using nucleoside diphosphates as substrates, but this may not be physiologically important. Probably plays a role in initiation of 16S rRNA degradation (leading to ribosome degradation) during starvation. This Dehalococcoides mccartyi (strain ATCC BAA-2100 / JCM 16839 / KCTC 5957 / BAV1) protein is Ribonuclease PH.